The chain runs to 228 residues: Cytidylate kinase (228 aa).

Residue Gly12–Thr20 coordinates ATP.

Belongs to the cytidylate kinase family. Type 1 subfamily.

It localises to the cytoplasm. It carries out the reaction CMP + ATP = CDP + ADP. The catalysed reaction is dCMP + ATP = dCDP + ADP. This is Cytidylate kinase from Lactiplantibacillus plantarum (strain ATCC BAA-793 / NCIMB 8826 / WCFS1) (Lactobacillus plantarum).